Consider the following 558-residue polypeptide: Glucose-6-phosphate isomerase (558 aa).

Residue Ala-2 is modified to N-acetylalanine. Lys-12 carries the post-translational modification N6-acetyllysine. The residue at position 34 (Lys-34) is an N6-(2-hydroxyisobutyryl)lysine. Phosphoserine is present on Ser-107. Thr-109 carries the post-translational modification Phosphothreonine. The residue at position 142 (Lys-142) is an N6-acetyllysine. 159–160 (GS) is a D-glucose 6-phosphate binding site. Ser-185 is modified (phosphoserine; by CK2). 210–215 (SKTFTT) serves as a coordination point for D-glucose 6-phosphate. Phosphothreonine is present on Thr-250. D-glucose 6-phosphate-binding residues include Gln-354, Glu-358, and His-389. Catalysis depends on Glu-358, which acts as the Proton donor. The active site involves His-389. Residue Lys-454 is modified to N6-acetyllysine; alternate. Lys-454 carries the N6-malonyllysine; alternate modification. At Lys-454 the chain carries N6-succinyllysine; alternate. Ser-455 bears the Phosphoserine mark. Lys-519 lines the D-glucose 6-phosphate pocket. The active site involves Lys-519.

It belongs to the GPI family. As to quaternary structure, homodimer; in the catalytically active form. Monomer in the secreted form. In terms of processing, phosphorylation at Ser-185 by CK2 has been shown to decrease enzymatic activity and may contribute to secretion by a non-classical secretory pathway. ISGylated.

It is found in the cytoplasm. The protein localises to the secreted. The enzyme catalyses alpha-D-glucose 6-phosphate = beta-D-fructose 6-phosphate. It participates in carbohydrate degradation; glycolysis; D-glyceraldehyde 3-phosphate and glycerone phosphate from D-glucose: step 2/4. In the cytoplasm, catalyzes the conversion of glucose-6-phosphate to fructose-6-phosphate, the second step in glycolysis, and the reverse reaction during gluconeogenesis. Besides it's role as a glycolytic enzyme, also acts as a secreted cytokine: acts as an angiogenic factor (AMF) that stimulates endothelial cell motility. Acts as a neurotrophic factor, neuroleukin, for spinal and sensory neurons. It is secreted by lectin-stimulated T-cells and induces immunoglobulin secretion. This chain is Glucose-6-phosphate isomerase, found in Pongo abelii (Sumatran orangutan).